We begin with the raw amino-acid sequence, 1053 residues long: DNA-directed RNA polymerase subunit beta' (1053 aa).

Positions 60, 62, 75, and 78 each coordinate Zn(2+). Asp449, Asp451, and Asp453 together coordinate Mg(2+). Positions 818, 892, 899, and 902 each coordinate Zn(2+).

Belongs to the RNA polymerase beta' chain family. The RNAP catalytic core consists of 2 alpha, 1 beta, 1 beta' and 1 omega subunit. When a sigma factor is associated with the core the holoenzyme is formed, which can initiate transcription. The cofactor is Mg(2+). Zn(2+) serves as cofactor.

The enzyme catalyses RNA(n) + a ribonucleoside 5'-triphosphate = RNA(n+1) + diphosphate. DNA-dependent RNA polymerase catalyzes the transcription of DNA into RNA using the four ribonucleoside triphosphates as substrates. This Listeria grayi (Listeria murrayi) protein is DNA-directed RNA polymerase subunit beta'.